The following is a 1461-amino-acid chain: Formin-3 (1461 aa).

Disordered stretches follow at residues 1 to 67 (MASK…SDDN) and 431 to 457 (YREESHTPHGNTTRKTSTPVSNNRPTT). Residues 12–28 (TSRSIQSRNSSYSTSSN) show a composition bias toward low complexity. Polar residues-rich tracts occupy residues 29–53 (ERIGTPSTISLSENSDLSKLQSTND) and 438–457 (PHGNTTRKTSTPVSNNRPTT). Residues 92 to 508 (SETEQLRKIY…KIQKSMQLLT (417 aa)) form the GBD/FH3 domain. An interaction with tea4 region spans residues 137–515 (QHTVLDEATY…LLTHTLEALE (379 aa)). Residues 540–639 (GTAEEIAEYK…VQNSNEQHLQ (100 aa)) are a coiled coil. The interval 683 to 811 (GIPVRVHTPS…EPKIDETSLT (129 aa)) is disordered. Over residues 700 to 718 (SFSGSEISSSPSPLLPDVS) the composition is skewed to low complexity. Residues 731–784 (SPPPPPPAVIVPTPAPAPIPVPPPAPIMGGPPPPPPPPGVAGAGPPPPPPPPPA) are compositionally biased toward pro residues. Residues 801–811 (PEPKIDETSLT) are compositionally biased toward basic and acidic residues. One can recognise an FH2 domain in the interval 845–1257 (LRDLHKPTRP…RIMSEDRDKL (413 aa)). 2 disordered regions span residues 1268 to 1337 (AKYR…AEEK) and 1416 to 1461 (ERLQ…RQKQ). Basic and acidic residues-rich tracts occupy residues 1273–1315 (KREL…KTGD) and 1325–1337 (MEDLEKPDYAEEK). Polar residues predominate over residues 1445-1454 (TNGSNASNLV).

Belongs to the formin homology family. In terms of assembly, interacts with rax2, rho3 and tea4. Interacts with tea1 in the presence of tea4.

The protein resides in the cytoplasm. It is found in the cell cortex. Its subcellular location is the cell tip. Functionally, involved in controlling polarized cell growth. Required for interphase actin cable formation and microtubule organization. This Schizosaccharomyces pombe (strain 972 / ATCC 24843) (Fission yeast) protein is Formin-3 (for3).